Reading from the N-terminus, the 27-residue chain is uncharacterized protein (27 aa).

Its subcellular location is the plastid. It is found in the cyanelle. This is an uncharacterized protein from Cyanophora paradoxa.